Consider the following 104-residue polypeptide: Phosphoribosyl-ATP pyrophosphatase (104 aa).

It belongs to the PRA-PH family.

The protein resides in the cytoplasm. It carries out the reaction 1-(5-phospho-beta-D-ribosyl)-ATP + H2O = 1-(5-phospho-beta-D-ribosyl)-5'-AMP + diphosphate + H(+). It participates in amino-acid biosynthesis; L-histidine biosynthesis; L-histidine from 5-phospho-alpha-D-ribose 1-diphosphate: step 2/9. This is Phosphoribosyl-ATP pyrophosphatase from Erythrobacter litoralis (strain HTCC2594).